Reading from the N-terminus, the 133-residue chain is Small ribosomal subunit protein uS8 (133 aa).

This sequence belongs to the universal ribosomal protein uS8 family. Part of the 30S ribosomal subunit. Contacts proteins S5 and S12.

Its function is as follows. One of the primary rRNA binding proteins, it binds directly to 16S rRNA central domain where it helps coordinate assembly of the platform of the 30S subunit. The sequence is that of Small ribosomal subunit protein uS8 from Trichormus variabilis (strain ATCC 29413 / PCC 7937) (Anabaena variabilis).